The primary structure comprises 205 residues: Adenylyl-sulfate kinase (205 aa).

ATP is bound at residue 31–38 (GLSGAGKS). Ser105 (phosphoserine intermediate) is an active-site residue.

Belongs to the APS kinase family.

The enzyme catalyses adenosine 5'-phosphosulfate + ATP = 3'-phosphoadenylyl sulfate + ADP + H(+). It functions in the pathway sulfur metabolism; hydrogen sulfide biosynthesis; sulfite from sulfate: step 2/3. Catalyzes the synthesis of activated sulfate. This chain is Adenylyl-sulfate kinase, found in Shewanella oneidensis (strain ATCC 700550 / JCM 31522 / CIP 106686 / LMG 19005 / NCIMB 14063 / MR-1).